The following is a 217-amino-acid chain: MAGKEEIIAKAKDSITEFDEEMAQEAANEALVAGLDPVEIIEHGYTAGMQYVGDQFEQGTLFLPHVLAAAEAMKAGIEVLQPEMEKRKAKTTTLGTVIIGTIEGDIHSIGKDIVASMLNIAGFEVVDLGRDVAIKTFVEKAKELKPDIVATSALMTTTMVNQIQLEEQLKEAGIRGQVKTMVGGAPVTQGWADKIGADIYGESATDAVNKIKAAIKS.

In terms of domain architecture, B12-binding N-terminal spans 1–92 (MAGKEEIIAK…EMEKRKAKTT (92 aa)). In terms of domain architecture, B12-binding spans 94–217 (LGTVIIGTIE…VNKIKAAIKS (124 aa)). His107 contributes to the methylcob(III)alamin binding site.

Belongs to the methylamine corrinoid protein family. As to quaternary structure, can form a complex with MttB.

It participates in one-carbon metabolism; methanogenesis from trimethylamine. In terms of biological role, acts probably as a methyl group carrier between MttB and either MtbA or MtaA. The protein is Trimethylamine corrinoid protein 2 (mttC2) of Methanosarcina acetivorans (strain ATCC 35395 / DSM 2834 / JCM 12185 / C2A).